A 183-amino-acid chain; its full sequence is Pyruvoyl-dependent arginine decarboxylase 2 (183 aa).

Ser-41 carries the post-translational modification Pyruvic acid (Ser).

Belongs to the PdaD family. Pyruvate serves as cofactor.

It carries out the reaction L-arginine + H(+) = agmatine + CO2. In Methanosarcina mazei (strain ATCC BAA-159 / DSM 3647 / Goe1 / Go1 / JCM 11833 / OCM 88) (Methanosarcina frisia), this protein is Pyruvoyl-dependent arginine decarboxylase 2 (pdaD2).